Reading from the N-terminus, the 77-residue chain is U8-lycotoxin-Ls1q (77 aa).

An N-terminal signal peptide occupies residues 1–20; that stretch reads MKLMIFAGLVLFAIVSLIEA. A propeptide spanning residues 21–26 is cleaved from the precursor; sequence QAEHEK.

This sequence belongs to the neurotoxin 19 (CSTX) family. 08 (U8-Lctx) subfamily. Contains 4 disulfide bonds. Expressed by the venom gland.

It localises to the secreted. This is U8-lycotoxin-Ls1q from Lycosa singoriensis (Wolf spider).